We begin with the raw amino-acid sequence, 568 residues long: MASFHSHSPSPPAALSPDDAPQPRRPSRTSLHDAAAAAAPALSPESPGHELEDGADSSEFNADDVPVEVLVKHLLAAKQSLSSMTLVLRANDLATSARQMHQEFVILSAQTAFLRHGILQELHILHQLRRGMARAYDNGTRDFKHIIRTLDTADGRLEKIMQVLRKTTVENVFRQPGEEPKCLLDFVDPKIVEQVRDALKESIHELSAAKTSFDGDLLRFDTDLRTLTDAMAAAASLANPTTTTPDGYPPDQRSIPNLLSALSEGSHLMAEHLSSLTRHFDMCVTAVRTTEGGAALARRRAAEATSSDEDQAPVSISGVISAQESESGPSAFEPMDPLERQELLHVVMRDAAEVDDVVADIHNVLQQMEMDHASLHSLFSASRASHAATLTCFSMLEEVGARASSYVAAEAEFMQRWEDEKETIDENVSKMDELKKFYEGFLNAYGGLLLEVERRRAVEGKIDSIWRKAKEQVDKLVEADKREREHFRLEVGDYVPADLWGVVDRPLGRWAVVPLEDTREGSYEMEAHGEPENEGKVETAYERETEPSTPTPRKMPLNGPGSAGERPF.

2 disordered regions span residues 1 to 59 (MASF…DSSE) and 522 to 568 (SYEM…ERPF). The segment covering 522 to 546 (SYEMEAHGEPENEGKVETAYERETE) has biased composition (basic and acidic residues).

Belongs to the ATG17 family.

It localises to the cytoplasm. Its subcellular location is the preautophagosomal structure membrane. Autophagy-specific protein that functions in response to autophagy-inducing signals as a scaffold to recruit other ATG proteins to organize pre-autophagosomal structure (PAS) formation. Modulates the timing and magnitude of the autophagy response, such as the size of the sequestering vesicles. Plays particularly a role in pexophagy and nucleophagy. The chain is Autophagy-related protein 17 (apg-9) from Neurospora crassa (strain ATCC 24698 / 74-OR23-1A / CBS 708.71 / DSM 1257 / FGSC 987).